A 122-amino-acid polypeptide reads, in one-letter code: uncharacterized protein (122 aa).

This is an uncharacterized protein from Mycoplasma pneumoniae (strain ATCC 29342 / M129 / Subtype 1) (Mycoplasmoides pneumoniae).